Reading from the N-terminus, the 96-residue chain is Co-chaperonin GroES 2 (96 aa).

It belongs to the GroES chaperonin family. As to quaternary structure, heptamer of 7 subunits arranged in a ring. Interacts with the chaperonin GroEL.

The protein resides in the cytoplasm. Its function is as follows. Together with the chaperonin GroEL, plays an essential role in assisting protein folding. The GroEL-GroES system forms a nano-cage that allows encapsulation of the non-native substrate proteins and provides a physical environment optimized to promote and accelerate protein folding. GroES binds to the apical surface of the GroEL ring, thereby capping the opening of the GroEL channel. This is Co-chaperonin GroES 2 from Vibrio cholerae serotype O1 (strain ATCC 39315 / El Tor Inaba N16961).